Reading from the N-terminus, the 183-residue chain is ATP synthase subunit delta (183 aa).

Belongs to the ATPase delta chain family. As to quaternary structure, F-type ATPases have 2 components, F(1) - the catalytic core - and F(0) - the membrane proton channel. F(1) has five subunits: alpha(3), beta(3), gamma(1), delta(1), epsilon(1). F(0) has three main subunits: a(1), b(2) and c(10-14). The alpha and beta chains form an alternating ring which encloses part of the gamma chain. F(1) is attached to F(0) by a central stalk formed by the gamma and epsilon chains, while a peripheral stalk is formed by the delta and b chains.

The protein resides in the cell inner membrane. Functionally, f(1)F(0) ATP synthase produces ATP from ADP in the presence of a proton or sodium gradient. F-type ATPases consist of two structural domains, F(1) containing the extramembraneous catalytic core and F(0) containing the membrane proton channel, linked together by a central stalk and a peripheral stalk. During catalysis, ATP synthesis in the catalytic domain of F(1) is coupled via a rotary mechanism of the central stalk subunits to proton translocation. In terms of biological role, this protein is part of the stalk that links CF(0) to CF(1). It either transmits conformational changes from CF(0) to CF(1) or is implicated in proton conduction. This is ATP synthase subunit delta from Maridesulfovibrio salexigens (strain ATCC 14822 / DSM 2638 / NCIMB 8403 / VKM B-1763) (Desulfovibrio salexigens).